The chain runs to 295 residues: 4-hydroxy-tetrahydrodipicolinate synthase (295 aa).

T48 provides a ligand contact to pyruvate. Catalysis depends on Y135, which acts as the Proton donor/acceptor. The active-site Schiff-base intermediate with substrate is K163. Position 204 (V204) interacts with pyruvate.

The protein belongs to the DapA family. In terms of assembly, homotetramer; dimer of dimers.

It is found in the cytoplasm. It catalyses the reaction L-aspartate 4-semialdehyde + pyruvate = (2S,4S)-4-hydroxy-2,3,4,5-tetrahydrodipicolinate + H2O + H(+). It participates in amino-acid biosynthesis; L-lysine biosynthesis via DAP pathway; (S)-tetrahydrodipicolinate from L-aspartate: step 3/4. In terms of biological role, catalyzes the condensation of (S)-aspartate-beta-semialdehyde [(S)-ASA] and pyruvate to 4-hydroxy-tetrahydrodipicolinate (HTPA). The sequence is that of 4-hydroxy-tetrahydrodipicolinate synthase from Francisella philomiragia subsp. philomiragia (strain ATCC 25017 / CCUG 19701 / FSC 153 / O#319-036).